The sequence spans 195 residues: Protein LIGHT-DEPENDENT SHORT HYPOCOTYLS 7 (195 aa).

2 disordered regions span residues 1 to 41 (MASH…LSRY) and 154 to 195 (SQAK…NLAS). The span at 21-36 (QPQPQPHQPQSPPNPP) shows a compositional bias: pro residues. The 128-residue stretch at 40-167 (RYESQKRRDW…ARGVPYKKRK (128 aa)) folds into the ALOG domain. Over residues 162 to 175 (PYKKRKKRKKRNPM) the composition is skewed to basic residues. The Nuclear localization signal signature appears at 165–169 (KRKKR). Residues 184-195 (TTGTSSSSNLAS) are compositionally biased toward low complexity.

Belongs to the plant homeotic and developmental regulators ALOG protein family.

The protein resides in the nucleus. Its function is as follows. Probable transcription regulator that acts as a developmental regulator by promoting cell growth in response to light. The polypeptide is Protein LIGHT-DEPENDENT SHORT HYPOCOTYLS 7 (LSH7) (Arabidopsis thaliana (Mouse-ear cress)).